Here is a 465-residue protein sequence, read N- to C-terminus: tRNA modification GTPase MnmE (465 aa).

(6S)-5-formyl-5,6,7,8-tetrahydrofolate-binding residues include arginine 30, glutamate 92, and arginine 132. In terms of domain architecture, TrmE-type G spans 227–388 (GLQVALVGRP…LIEAVLKTCG (162 aa)). Asparagine 237 contacts K(+). Residues 237–242 (NVGKSS), 256–262 (TDLPGTT), 281–284 (DTAG), and 342–345 (NKAD) each bind GTP. Serine 241 provides a ligand contact to Mg(2+). The K(+) site is built by threonine 256, leucine 258, and threonine 261. Threonine 262 provides a ligand contact to Mg(2+). Lysine 465 is a binding site for (6S)-5-formyl-5,6,7,8-tetrahydrofolate.

Belongs to the TRAFAC class TrmE-Era-EngA-EngB-Septin-like GTPase superfamily. TrmE GTPase family. Homodimer. Heterotetramer of two MnmE and two MnmG subunits. Requires K(+) as cofactor.

The protein localises to the cytoplasm. Functionally, exhibits a very high intrinsic GTPase hydrolysis rate. Involved in the addition of a carboxymethylaminomethyl (cmnm) group at the wobble position (U34) of certain tRNAs, forming tRNA-cmnm(5)s(2)U34. The sequence is that of tRNA modification GTPase MnmE from Prochlorococcus marinus (strain MIT 9303).